Here is a 574-residue protein sequence, read N- to C-terminus: 5'-nucleotidase (574 aa).

Residues 1–26 form the signal peptide; sequence MCPRAARAPATLLLALGAVLWPAAGA. Zn(2+) contacts are provided by D36 and H38. The cysteines at positions 51 and 57 are disulfide-linked. N53 carries an N-linked (GlcNAc...) asparagine glycan. Zn(2+)-binding residues include D85, N117, H220, and H243. Residues N311 and N333 are each glycosylated (N-linked (GlcNAc...) asparagine). Cystine bridges form between C353–C358 and C365–C387. An AMP-binding site is contributed by R354. R354 serves as a coordination point for IMP. 2 residues coordinate AMP: N390 and R395. Residues N390 and R395 each coordinate IMP. N-linked (GlcNAc...) asparagine glycosylation occurs at N403. F417 provides a ligand contact to AMP. F417 is a binding site for IMP. C476 and C479 are joined by a disulfide. Residues F500 and D506 each contribute to the AMP site. F500 and D506 together coordinate IMP. A lipid anchor (GPI-anchor amidated serine) is attached at S549. Positions 550–574 are cleaved as a propeptide — removed in mature form; the sequence is TGSHCHGSFSLIFLSLWAVIFVLYQ.

Belongs to the 5'-nucleotidase family. Homodimer. Requires Zn(2+) as cofactor.

It is found in the cell membrane. It carries out the reaction a ribonucleoside 5'-phosphate + H2O = a ribonucleoside + phosphate. The enzyme catalyses a 2'-deoxyribonucleoside 5'-phosphate + H2O = a 2'-deoxyribonucleoside + phosphate. The catalysed reaction is dTMP + H2O = thymidine + phosphate. It catalyses the reaction CMP + H2O = cytidine + phosphate. It carries out the reaction IMP + H2O = inosine + phosphate. The enzyme catalyses AMP + H2O = adenosine + phosphate. The catalysed reaction is GMP + H2O = guanosine + phosphate. It catalyses the reaction UMP + H2O = uridine + phosphate. It carries out the reaction dAMP + H2O = 2'-deoxyadenosine + phosphate. The enzyme catalyses dCMP + H2O = 2'-deoxycytidine + phosphate. Inhibited by adenosine 5'-(alpha,beta-methylene)-diphosphate (AMPCP). Its function is as follows. Catalyzes the hydrolysis of nucleotide monophosphates, releasing inorganic phosphate and the corresponding nucleoside, with AMP being the preferred substrate. Shows a preference for ribonucleotide monophosphates over their equivalent deoxyribose forms. Other substrates include IMP, UMP, GMP, CMP, dAMP, dCMP, dTMP, NAD and NMN. In Homo sapiens (Human), this protein is 5'-nucleotidase (NT5E).